The chain runs to 150 residues: Large ribosomal subunit protein bL9 (150 aa).

Belongs to the bacterial ribosomal protein bL9 family.

Functionally, binds to the 23S rRNA. In Halorhodospira halophila (strain DSM 244 / SL1) (Ectothiorhodospira halophila (strain DSM 244 / SL1)), this protein is Large ribosomal subunit protein bL9.